A 299-amino-acid chain; its full sequence is Tyrosine recombinase XerC (299 aa).

Residues 1-85 enclose the Core-binding (CB) domain; sequence MKRQLEAYCA…AVRGLYRYLN (85 aa). The Tyr recombinase domain occupies 106-285; sequence RLPKVLDTDR…DFQHLAAVYD (180 aa). Residues Arg146, Lys170, His237, Arg240, and His263 contribute to the active site. The active-site O-(3'-phospho-DNA)-tyrosine intermediate is the Tyr272.

It belongs to the 'phage' integrase family. XerC subfamily. In terms of assembly, forms a cyclic heterotetrameric complex composed of two molecules of XerC and two molecules of XerD.

It localises to the cytoplasm. Site-specific tyrosine recombinase, which acts by catalyzing the cutting and rejoining of the recombining DNA molecules. The XerC-XerD complex is essential to convert dimers of the bacterial chromosome into monomers to permit their segregation at cell division. It also contributes to the segregational stability of plasmids. This is Tyrosine recombinase XerC from Pseudomonas putida (strain ATCC 700007 / DSM 6899 / JCM 31910 / BCRC 17059 / LMG 24140 / F1).